The primary structure comprises 1155 residues: Alpha,alpha-trehalose-phosphate synthase [UDP-forming] 1 (1155 aa).

The segment at leucine 56–glutamate 94 is disordered. Low complexity predominate over residues serine 63–serine 72.

In the N-terminal section; belongs to the glycosyltransferase 20 family. The protein in the C-terminal section; belongs to the gob-1 trehalose phosphatase family.

It carries out the reaction D-glucose 6-phosphate + UDP-alpha-D-glucose = alpha,alpha-trehalose 6-phosphate + UDP + H(+). Catalyzes the production of trehalose from glucose-6-phosphate and UDP-alpha-D-glucose in a 2 step process. This Aphelenchoides avenae (Mycophagous nematode worm) protein is Alpha,alpha-trehalose-phosphate synthase [UDP-forming] 1 (tps-1).